We begin with the raw amino-acid sequence, 448 residues long: Methionine aminopeptidase 2 (448 aa).

The interval 1–47 (MTSSVDKVSQKVADVKLGSSKSTKNNKSKGKGKSNKNQVVEDDDEDD) is disordered. The segment covering 24 to 34 (KNNKSKGKGKS) has biased composition (basic residues). A substrate-binding site is contributed by H198. 3 residues coordinate a divalent metal cation: D218, D229, and H298. H306 is a substrate binding site. The a divalent metal cation site is built by E331 and E429.

It belongs to the peptidase M24A family. Methionine aminopeptidase eukaryotic type 2 subfamily. Co(2+) is required as a cofactor. The cofactor is Zn(2+). Mn(2+) serves as cofactor. It depends on Fe(2+) as a cofactor.

It is found in the cytoplasm. It carries out the reaction Release of N-terminal amino acids, preferentially methionine, from peptides and arylamides.. Its function is as follows. Cotranslationally removes the N-terminal methionine from nascent proteins. The N-terminal methionine is often cleaved when the second residue in the primary sequence is small and uncharged (Met-Ala-, Cys, Gly, Pro, Ser, Thr, or Val). The protein is Methionine aminopeptidase 2 of Komagataella phaffii (strain GS115 / ATCC 20864) (Yeast).